The chain runs to 207 residues: MSTVVATVVFAVAAYLIGSVSFAVVVSRAMGLADPRTYGSGNPGATNVLRSGNKKAAILTLLGDAAKGWLAVWLAQLLAPRYGVEDMGIALVVIAAFLGHLYPVFHRFTGGKGVATAAGILLALSGWLGLATLATWLIIATFFRYSSLAALVSAVFAPFYYVLLFGIDPLAGAIAVMSVLLIARHRANIAKLLAGKESRIGEKKKPT.

A run of 5 helical transmembrane segments spans residues 4–24 (VVAT…SFAV), 58–78 (ILTL…AQLL), 86–106 (DMGI…PVFH), 120–140 (ILLA…LIIA), and 162–182 (VLLF…VLLI).

This sequence belongs to the PlsY family. As to quaternary structure, probably interacts with PlsX.

It localises to the cell inner membrane. The catalysed reaction is an acyl phosphate + sn-glycerol 3-phosphate = a 1-acyl-sn-glycero-3-phosphate + phosphate. The protein operates within lipid metabolism; phospholipid metabolism. Catalyzes the transfer of an acyl group from acyl-phosphate (acyl-PO(4)) to glycerol-3-phosphate (G3P) to form lysophosphatidic acid (LPA). This enzyme utilizes acyl-phosphate as fatty acyl donor, but not acyl-CoA or acyl-ACP. The protein is Glycerol-3-phosphate acyltransferase of Ralstonia nicotianae (strain ATCC BAA-1114 / GMI1000) (Ralstonia solanacearum).